We begin with the raw amino-acid sequence, 315 residues long: Probable cell division protein kinase ECU11_1290 (315 aa).

The region spanning 13–294 is the Protein kinase domain; the sequence is YEKVCRISSG…ASQGLCSGFV (282 aa). ATP is bound by residues 19–27 and K42; that span reads ISSGSFGNV. D138 serves as the catalytic Proton acceptor.

The protein belongs to the protein kinase superfamily. CMGC Ser/Thr protein kinase family. CDC2/CDKX subfamily.

It is found in the nucleus. The catalysed reaction is L-seryl-[protein] + ATP = O-phospho-L-seryl-[protein] + ADP + H(+). It catalyses the reaction L-threonyl-[protein] + ATP = O-phospho-L-threonyl-[protein] + ADP + H(+). In terms of biological role, may play a role in the control of the eukaryotic cell cycle. The polypeptide is Probable cell division protein kinase ECU11_1290 (Encephalitozoon cuniculi (strain GB-M1) (Microsporidian parasite)).